A 342-amino-acid chain; its full sequence is Anthranilate phosphoribosyltransferase (342 aa).

Residues Gly74, 77–78 (GD), Thr82, 84–87 (NVST), 101–109 (KHGNRSVSG), and Ser113 contribute to the 5-phospho-alpha-D-ribose 1-diphosphate site. Gly74 contributes to the anthranilate binding site. Ser86 lines the Mg(2+) pocket. Position 104 (Asn104) interacts with anthranilate. Arg159 contacts anthranilate. Mg(2+)-binding residues include Asp218 and Glu219.

Belongs to the anthranilate phosphoribosyltransferase family. Homodimer. Requires Mg(2+) as cofactor.

It carries out the reaction N-(5-phospho-beta-D-ribosyl)anthranilate + diphosphate = 5-phospho-alpha-D-ribose 1-diphosphate + anthranilate. It functions in the pathway amino-acid biosynthesis; L-tryptophan biosynthesis; L-tryptophan from chorismate: step 2/5. In terms of biological role, catalyzes the transfer of the phosphoribosyl group of 5-phosphorylribose-1-pyrophosphate (PRPP) to anthranilate to yield N-(5'-phosphoribosyl)-anthranilate (PRA). The polypeptide is Anthranilate phosphoribosyltransferase (Sulfolobus acidocaldarius (strain ATCC 33909 / DSM 639 / JCM 8929 / NBRC 15157 / NCIMB 11770)).